Here is a 1030-residue protein sequence, read N- to C-terminus: ADAMTS-like protein 4 (1030 aa).

A signal peptide spans 1–24 (MELWLGRLWLYVMLLLLLLQLCQD). The 45-residue stretch at 47 to 91 (GPWGRWASCSQPCGVGVQRRSRTCELHPALSLPPRPPRHPEAPQP) folds into the TSP type-1 1 domain. 2 disordered regions span residues 73–150 (HPAL…KPGM) and 168–306 (LAHK…LPLT). 3 stretches are compositionally biased toward polar residues: residues 176–186 (KDSSTAEETLP), 211–237 (QSRS…SSAP), and 245–257 (PTSS…SFQG). N-linked (GlcNAc...) asparagine glycosylation is found at Asn451 and Asn731. TSP type-1 domains follow at residues 681 to 740 (CPPY…QLRL), 741 to 800 (CGHW…GPCT), 803 to 865 (WFYS…GPCE), 866 to 925 (KTWR…QGQA), and 926 to 982 (CEDQ…QPCN). One can recognise a PLAC domain in the interval 985-1022 (PDDQCKDSSPHCPLVVQARLCVYPYYTATCCRSCAHVL).

As to quaternary structure, interacts with CTSB. Interacts with FBN1. Glycosylated. Can be O-fucosylated by POFUT2 on a serine or a threonine residue found within the consensus sequence C1-X(2)-(S/T)-C2-G of the TSP type-1 repeat domains where C1 and C2 are the first and second cysteine residue of the repeat, respectively. Fucosylated repeats can then be further glycosylated by the addition of a beta-1,3-glucose residue by the glucosyltransferase, B3GALTL. Fucosylation mediates the efficient secretion of ADAMTS family members. Can also be C-glycosylated with one or two mannose molecules on tryptophan residues within the consensus sequence W-X-X-W of the TPRs, and N-glycosylated. These other glycosylations can also facilitate secretion.

It is found in the secreted. Its subcellular location is the extracellular space. The protein localises to the extracellular matrix. Its function is as follows. Positive regulation of apoptosis. May facilitate FBN1 microfibril biogenesis. The protein is ADAMTS-like protein 4 of Rattus norvegicus (Rat).